Consider the following 672-residue polypeptide: tRNA 5-methylaminomethyl-2-thiouridine biosynthesis bifunctional protein MnmC (672 aa).

The tract at residues 1–243 (MTSIKNAELG…KREMIAGSME (243 aa)) is tRNA (mnm(5)s(2)U34)-methyltransferase. The FAD-dependent cmnm(5)s(2)U34 oxidoreductase stretch occupies residues 269–672 (IGGGIASAAL…LRKGKAITEL (404 aa)).

The protein in the N-terminal section; belongs to the methyltransferase superfamily. tRNA (mnm(5)s(2)U34)-methyltransferase family. In the C-terminal section; belongs to the DAO family. The cofactor is FAD.

The protein resides in the cytoplasm. It carries out the reaction 5-aminomethyl-2-thiouridine(34) in tRNA + S-adenosyl-L-methionine = 5-methylaminomethyl-2-thiouridine(34) in tRNA + S-adenosyl-L-homocysteine + H(+). Its function is as follows. Catalyzes the last two steps in the biosynthesis of 5-methylaminomethyl-2-thiouridine (mnm(5)s(2)U) at the wobble position (U34) in tRNA. Catalyzes the FAD-dependent demodification of cmnm(5)s(2)U34 to nm(5)s(2)U34, followed by the transfer of a methyl group from S-adenosyl-L-methionine to nm(5)s(2)U34, to form mnm(5)s(2)U34. In Vibrio campbellii (strain ATCC BAA-1116), this protein is tRNA 5-methylaminomethyl-2-thiouridine biosynthesis bifunctional protein MnmC.